We begin with the raw amino-acid sequence, 78 residues long: Exodeoxyribonuclease 7 small subunit (78 aa).

This sequence belongs to the XseB family. As to quaternary structure, heterooligomer composed of large and small subunits.

The protein localises to the cytoplasm. The catalysed reaction is Exonucleolytic cleavage in either 5'- to 3'- or 3'- to 5'-direction to yield nucleoside 5'-phosphates.. Its function is as follows. Bidirectionally degrades single-stranded DNA into large acid-insoluble oligonucleotides, which are then degraded further into small acid-soluble oligonucleotides. This Idiomarina loihiensis (strain ATCC BAA-735 / DSM 15497 / L2-TR) protein is Exodeoxyribonuclease 7 small subunit.